The chain runs to 160 residues: Ribonuclease ARB_07070 (160 aa).

The N-terminal stretch at 1-18 (MVSFKAILTLSLIGAAFA) is a signal peptide. Residues 26-51 (AEPVEDSGAVANSPEGSGMDLGGTDP) are disordered. Glu-103 (proton acceptor) is an active-site residue. The active-site Proton donor is the His-144.

Belongs to the ribonuclease U2 family.

The protein resides in the secreted. Functionally, this purine-specific ribonuclease cleaves 28S RNA in eukaryotic ribosomes, inhibits protein synthesis, and shows antitumor activity. This chain is Ribonuclease ARB_07070, found in Arthroderma benhamiae (strain ATCC MYA-4681 / CBS 112371) (Trichophyton mentagrophytes).